A 508-amino-acid chain; its full sequence is Light-independent protochlorophyllide reductase subunit B (508 aa).

Asp-36 contacts [4Fe-4S] cluster. The Proton donor role is filled by Asp-294. 429–430 (GM) is a substrate binding site.

This sequence belongs to the ChlB/BchB/BchZ family. In terms of assembly, protochlorophyllide reductase is composed of three subunits; ChlL, ChlN and ChlB. Forms a heterotetramer of two ChlB and two ChlN subunits. The cofactor is [4Fe-4S] cluster.

The catalysed reaction is chlorophyllide a + oxidized 2[4Fe-4S]-[ferredoxin] + 2 ADP + 2 phosphate = protochlorophyllide a + reduced 2[4Fe-4S]-[ferredoxin] + 2 ATP + 2 H2O. Its pathway is porphyrin-containing compound metabolism; chlorophyll biosynthesis (light-independent). Its function is as follows. Component of the dark-operative protochlorophyllide reductase (DPOR) that uses Mg-ATP and reduced ferredoxin to reduce ring D of protochlorophyllide (Pchlide) to form chlorophyllide a (Chlide). This reaction is light-independent. The NB-protein (ChlN-ChlB) is the catalytic component of the complex. The sequence is that of Light-independent protochlorophyllide reductase subunit B from Crocosphaera subtropica (strain ATCC 51142 / BH68) (Cyanothece sp. (strain ATCC 51142)).